Reading from the N-terminus, the 631-residue chain is Fatty acid ABC transporter ATP-binding/permease protein (631 aa).

Positions 1-11 (MTAPPGARPRA) are enriched in low complexity. Residues 1 to 20 (MTAPPGARPRAASPPPNMRS) form a disordered region. 3 consecutive transmembrane segments (helical) span residues 42-62 (IAVITLGIAGTTIGVIVPRIL), 123-143 (LALALALYLAAALMIWAQARL), and 205-225 (ILTMVAVLAMMVSISGLLALI). Residues 42–365 (IAVITLGIAG…LAGMYNALQS (324 aa)) form the ABC transmembrane type-1 domain. Residues 397 to 631 (VEFEHVNFAY…RGVYYQMTRA (235 aa)) enclose the ABC transporter domain. 430 to 437 (GPTGAGKT) lines the ATP pocket.

This sequence belongs to the ABC transporter superfamily. Lipid exporter (TC 3.A.1.106) family.

The protein resides in the cell inner membrane. Functionally, ABC transporter involved in fatty acid import. Transmembrane domains (TMD) form a pore in the membrane and the ATP-binding domain (NBD) is responsible for energy generation. This is Fatty acid ABC transporter ATP-binding/permease protein from Mycobacterium bovis (strain ATCC BAA-935 / AF2122/97).